Reading from the N-terminus, the 165-residue chain is Transcriptional repressor NrdR (165 aa).

Residues 3 to 34 fold into a zinc finger; the sequence is CPFCRHPDSRVVDSREADEGQAIRRRRSCPEC. The ATP-cone domain occupies 46-136; that stretch reads LSVVKRSGVT…VYKSFSSAAD (91 aa).

This sequence belongs to the NrdR family. Zn(2+) is required as a cofactor.

Its function is as follows. Negatively regulates transcription of bacterial ribonucleotide reductase nrd genes and operons by binding to NrdR-boxes. The polypeptide is Transcriptional repressor NrdR (Rhodococcus erythropolis (strain PR4 / NBRC 100887)).